Reading from the N-terminus, the 272-residue chain is Diaminopimelate epimerase (272 aa).

Residues asparagine 11 and asparagine 60 each coordinate substrate. The active-site Proton donor is the cysteine 69. Substrate is bound by residues 70 to 71, asparagine 181, and 199 to 200; these read GN and ER. Cysteine 209 serves as the catalytic Proton acceptor. Residue 210 to 211 coordinates substrate; that stretch reads GT.

It belongs to the diaminopimelate epimerase family. Homodimer.

Its subcellular location is the cytoplasm. The catalysed reaction is (2S,6S)-2,6-diaminopimelate = meso-2,6-diaminopimelate. It participates in amino-acid biosynthesis; L-lysine biosynthesis via DAP pathway; DL-2,6-diaminopimelate from LL-2,6-diaminopimelate: step 1/1. In terms of biological role, catalyzes the stereoinversion of LL-2,6-diaminopimelate (L,L-DAP) to meso-diaminopimelate (meso-DAP), a precursor of L-lysine and an essential component of the bacterial peptidoglycan. This is Diaminopimelate epimerase from Helicobacter pylori (strain P12).